The sequence spans 313 residues: Protein PHOSPHATE-INDUCED 1 (313 aa).

The N-terminal stretch at 1–22 (MATSHFILKLFLVISFCNVCFA) is a signal peptide. N-linked (GlcNAc...) asparagine glycosylation is present at Asn119.

This sequence belongs to the EXORDIUM family.

The protein resides in the secreted. Its subcellular location is the extracellular space. The protein localises to the apoplast. Its function is as follows. May be involved in the regulation of cell division. The protein is Protein PHOSPHATE-INDUCED 1 of Nicotiana tabacum (Common tobacco).